The sequence spans 1789 residues: Protein TIC 214 (1789 aa).

Transmembrane regions (helical) follow at residues 19 to 39 (IINS…FSIG), 68 to 88 (FIAG…HLAL), 91 to 111 (PHTI…WNNH), 133 to 153 (VFLN…SSML), 176 to 196 (VGWL…LVWI), and 227 to 247 (IFSI…PSPI).

It belongs to the TIC214 family. In terms of assembly, part of the Tic complex.

The protein localises to the plastid. The protein resides in the chloroplast inner membrane. In terms of biological role, involved in protein precursor import into chloroplasts. May be part of an intermediate translocation complex acting as a protein-conducting channel at the inner envelope. The protein is Protein TIC 214 of Capsella bursa-pastoris (Shepherd's purse).